A 223-amino-acid chain; its full sequence is Killer cell lectin-like receptor subfamily B member 1B allele C (223 aa).

The Cytoplasmic segment spans residues 1-45 (MDTAVVYADLHLARTGEPKRESPPSLSPDTCQCPRWHRLALKLGC). An ITIM motif motif is present at residues 5–10 (VVYADL). The short motif at 31–34 (CQCP) is the LCK-binding motif element. A helical; Signal-anchor for type II membrane protein membrane pass occupies residues 46–66 (ACFILLVLSVIGLGVLVLTLL). The Extracellular segment spans residues 67–223 (QKPLLQNSPA…LKRESTCNDS (157 aa)). Residues 101–211 (HRDKCFHVSQ…CDSDNIWICQ (111 aa)) form the C-type lectin domain. Cystine bridges form between cysteine 122/cysteine 210 and cysteine 189/cysteine 202.

As to quaternary structure, homodimer; disulfide-linked. Interacts with tyrosine kinase LCK. Binds PTPN6/SHP-1 in a phosphorylation-dependent manner. In terms of tissue distribution, expressed in a subset of natural killer cells.

It localises to the membrane. Receptor for CLEC2D/OCIL. Ligand-binding contributes to inhibition of cytotoxic natural killer (NK) cells. May mediate MHC class I-independent 'missing-self' recognition of allografts, tumor cells and virus-infected cells. This chain is Killer cell lectin-like receptor subfamily B member 1B allele C, found in Rattus norvegicus (Rat).